Consider the following 4083-residue polypeptide: Dynein axonemal heavy chain 3 (4083 aa).

Disordered stretches follow at residues 1–37 (MSDT…VSAN) and 111–132 (DKTS…PSKK). The interval 1 to 1357 (MSDTNCSAQK…HVQMITTEAL (1357 aa)) is stem. 2 coiled-coil regions span residues 1026-1052 (IKPI…AWLK) and 1108-1133 (RMTE…YLEK). AAA regions lie at residues 1358 to 1579 (YGYE…VLTA), 1639 to 1870 (EALN…LHCK), 2003 to 2251 (TIPA…VIQG), and 2362 to 2613 (EFNS…LLRH). ATP contacts are provided by residues 1396–1403 (GPAGTGKT), 1677–1684 (GDPMGGKT), 2041–2048 (GPTGTGKS), and 2401–2408 (GIGGSGRQ). The stalk stretch occupies residues 2628–2927 (FKTLLNSKRQ…NSLEKNIEIC (300 aa)). Residues 2651 to 2714 (QKLEFASSQV…DEKEANAAAA (64 aa)) adopt a coiled-coil conformation. AAA stretches follow at residues 3012 to 3242 (LGDP…EISE) and 3455 to 3679 (IQNF…QIQM).

It belongs to the dynein heavy chain family. In terms of assembly, consists of at least two heavy chains and a number of intermediate and light chains.

It localises to the cytoplasm. The protein resides in the cytoskeleton. Its subcellular location is the cilium axoneme. Force generating protein of respiratory cilia. Produces force towards the minus ends of microtubules. Dynein has ATPase activity; the force-producing power stroke is thought to occur on release of ADP. Involved in sperm motility; implicated in sperm flagellar assembly. The protein is Dynein axonemal heavy chain 3 (Dnah3) of Mus musculus (Mouse).